Consider the following 1107-residue polypeptide: Probable chromatin-remodeling complex ATPase chain (1107 aa).

Disordered regions lie at residues 1–124 and 177–217; these read MAKP…KREK and GNQS…GSGG. 4 stretches are compositionally biased toward acidic residues: residues 8–25, 33–43, 53–65, and 89–114; these read DEEE…EEQS, GEEEDEEEEEA, GGEE…EEIE, and EGDE…DEAE. A coiled-coil region spans residues 121–147; sequence KREKARLKEMQKLKKQKIQEILDTQNA. A compositionally biased stretch (basic residues) spans 183–193; it reads KKPRGRGRHAS. The span at 197 to 211 shows a compositional bias: acidic residues; that stretch reads EEEEDEEYLKEEEDA. A Helicase ATP-binding domain is found at 243 to 408; that stretch reads IRLYENGING…WSLLNFLLPE (166 aa). 256-263 is a binding site for ATP; sequence DEMGLGKT. Residues 359 to 362 carry the DEAH box motif; that stretch reads DEAH. The Helicase C-terminal domain maps to 536–687; sequence LLDKLLPKLK…ALVIQQGRLA (152 aa). SANT domains lie at 877 to 929 and 978 to 1039; these read EGFA…ERYK and QNKG…DTLI. The stretch at 1029-1067 forms a coiled coil; that stretch reads QELARRCDTLIRLVEKENQEYDEQERQARKDKRMAKNMT. A disordered region spans residues 1049–1107; the sequence is YDEQERQARKDKRMAKNMTPTKRSALRVSEGETTPSNSFKRRRQSLMDDYVGSGRRKRG.

It belongs to the SNF2/RAD54 helicase family. ISWI subfamily.

It is found in the nucleus. In terms of biological role, possesses intrinsic ATP-dependent nucleosome-remodeling activity. Constitutes the catalytic subunit of several complexes capable of forming ordered nucleosome arrays on chromatin in vitro. The chain is Probable chromatin-remodeling complex ATPase chain from Oryza sativa subsp. japonica (Rice).